The primary structure comprises 374 residues: Pyruvate dehydrogenase E1 component subunit beta-1, mitochondrial (374 aa).

The N-terminal 34 residues, 1 to 34 (MLGIARRRLGSGCALGQLMQALRPAAAAAAARTY), are a transit peptide targeting the mitochondrion. A thiamine diphosphate-binding site is contributed by Glu97. K(+)-binding residues include Ile150, Ala198, Ile199, and Asp201.

Tetramer of 2 alpha and 2 beta subunits. Thiamine diphosphate is required as a cofactor.

It is found in the mitochondrion matrix. It carries out the reaction N(6)-[(R)-lipoyl]-L-lysyl-[protein] + pyruvate + H(+) = N(6)-[(R)-S(8)-acetyldihydrolipoyl]-L-lysyl-[protein] + CO2. The pyruvate dehydrogenase complex catalyzes the overall conversion of pyruvate to acetyl-CoA and CO(2). It contains multiple copies of three enzymatic components: pyruvate dehydrogenase (E1), dihydrolipoamide acetyltransferase (E2) and lipoamide dehydrogenase (E3). This Oryza sativa subsp. japonica (Rice) protein is Pyruvate dehydrogenase E1 component subunit beta-1, mitochondrial.